The primary structure comprises 269 residues: Ribosomal RNA small subunit methyltransferase A (269 aa).

Positions 18, 20, 45, 66, 91, and 112 each coordinate S-adenosyl-L-methionine.

It belongs to the class I-like SAM-binding methyltransferase superfamily. rRNA adenine N(6)-methyltransferase family. RsmA subfamily.

The protein localises to the cytoplasm. The catalysed reaction is adenosine(1518)/adenosine(1519) in 16S rRNA + 4 S-adenosyl-L-methionine = N(6)-dimethyladenosine(1518)/N(6)-dimethyladenosine(1519) in 16S rRNA + 4 S-adenosyl-L-homocysteine + 4 H(+). In terms of biological role, specifically dimethylates two adjacent adenosines (A1518 and A1519) in the loop of a conserved hairpin near the 3'-end of 16S rRNA in the 30S particle. May play a critical role in biogenesis of 30S subunits. This chain is Ribosomal RNA small subunit methyltransferase A, found in Shewanella loihica (strain ATCC BAA-1088 / PV-4).